The primary structure comprises 465 residues: Cysteine--tRNA ligase (465 aa).

Cys27 is a Zn(2+) binding site. Positions 29 to 39 match the 'HIGH' region motif; it reads PTVYNFFHIGN. Residues Cys207, His232, and Glu236 each contribute to the Zn(2+) site. Positions 264–268 match the 'KMSKS' region motif; it reads KMSKS. Position 267 (Lys267) interacts with ATP.

The protein belongs to the class-I aminoacyl-tRNA synthetase family. Monomer. It depends on Zn(2+) as a cofactor.

Its subcellular location is the cytoplasm. It carries out the reaction tRNA(Cys) + L-cysteine + ATP = L-cysteinyl-tRNA(Cys) + AMP + diphosphate. In Clostridium botulinum (strain Langeland / NCTC 10281 / Type F), this protein is Cysteine--tRNA ligase.